The primary structure comprises 341 residues: Anthranilate phosphoribosyltransferase (341 aa).

5-phospho-alpha-D-ribose 1-diphosphate is bound by residues Gly-81, 84-85 (GD), 91-94 (NVST), 109-117 (KHGNRSVSS), and Ser-121. Gly-81 contacts anthranilate. Residue Ser-93 participates in Mg(2+) binding. Asn-112 is a binding site for anthranilate. Residue Arg-167 participates in anthranilate binding. Mg(2+) is bound by residues Asp-226 and Glu-227.

The protein belongs to the anthranilate phosphoribosyltransferase family. Homodimer. The cofactor is Mg(2+).

It catalyses the reaction N-(5-phospho-beta-D-ribosyl)anthranilate + diphosphate = 5-phospho-alpha-D-ribose 1-diphosphate + anthranilate. The protein operates within amino-acid biosynthesis; L-tryptophan biosynthesis; L-tryptophan from chorismate: step 2/5. Catalyzes the transfer of the phosphoribosyl group of 5-phosphorylribose-1-pyrophosphate (PRPP) to anthranilate to yield N-(5'-phosphoribosyl)-anthranilate (PRA). In Saccharophagus degradans (strain 2-40 / ATCC 43961 / DSM 17024), this protein is Anthranilate phosphoribosyltransferase.